The primary structure comprises 123 residues: Large ribosomal subunit protein uL14 (123 aa).

Belongs to the universal ribosomal protein uL14 family. In terms of assembly, part of the 50S ribosomal subunit. Forms a cluster with proteins L3 and L19. In the 70S ribosome, L14 and L19 interact and together make contacts with the 16S rRNA in bridges B5 and B8.

In terms of biological role, binds to 23S rRNA. Forms part of two intersubunit bridges in the 70S ribosome. This Blochmanniella pennsylvanica (strain BPEN) protein is Large ribosomal subunit protein uL14.